The following is a 218-amino-acid chain: 7-cyano-7-deazaguanine synthase (218 aa).

Phe-10 to Leu-20 provides a ligand contact to ATP. Residues Cys-186, Cys-195, Cys-198, and Cys-201 each coordinate Zn(2+).

It belongs to the QueC family. As to quaternary structure, homodimer. The cofactor is Zn(2+).

It carries out the reaction 7-carboxy-7-deazaguanine + NH4(+) + ATP = 7-cyano-7-deazaguanine + ADP + phosphate + H2O + H(+). It functions in the pathway purine metabolism; 7-cyano-7-deazaguanine biosynthesis. Its function is as follows. Catalyzes the ATP-dependent conversion of 7-carboxy-7-deazaguanine (CDG) to 7-cyano-7-deazaguanine (preQ(0)). This is 7-cyano-7-deazaguanine synthase from Exiguobacterium sibiricum (strain DSM 17290 / CCUG 55495 / CIP 109462 / JCM 13490 / 255-15).